The following is a 475-amino-acid chain: Sulfate adenylyltransferase subunit 1 (475 aa).

The region spanning 25–239 is the tr-type G domain; sequence KSLLRFLTCG…EVLETVEIQR (215 aa). A G1 region spans residues 34–41; it reads GSVDDGKS. 34–41 contacts GTP; it reads GSVDDGKS. The segment at 92–96 is G2; it reads GITID. A G3 region spans residues 113–116; the sequence is DTPG. GTP contacts are provided by residues 113-117 and 168-171; these read DTPGH and NKMD. A G4 region spans residues 168-171; that stretch reads NKMD. Residues 206-208 are G5; that stretch reads SAL.

This sequence belongs to the TRAFAC class translation factor GTPase superfamily. Classic translation factor GTPase family. CysN/NodQ subfamily. In terms of assembly, heterodimer composed of CysD, the smaller subunit, and CysN.

The catalysed reaction is sulfate + ATP + H(+) = adenosine 5'-phosphosulfate + diphosphate. Its pathway is sulfur metabolism; hydrogen sulfide biosynthesis; sulfite from sulfate: step 1/3. In terms of biological role, with CysD forms the ATP sulfurylase (ATPS) that catalyzes the adenylation of sulfate producing adenosine 5'-phosphosulfate (APS) and diphosphate, the first enzymatic step in sulfur assimilation pathway. APS synthesis involves the formation of a high-energy phosphoric-sulfuric acid anhydride bond driven by GTP hydrolysis by CysN coupled to ATP hydrolysis by CysD. The polypeptide is Sulfate adenylyltransferase subunit 1 (Escherichia coli (strain ATCC 8739 / DSM 1576 / NBRC 3972 / NCIMB 8545 / WDCM 00012 / Crooks)).